Consider the following 151-residue polypeptide: MFRGATAVNLDSKGRVAIPTRYRAEILEKNQGKMVCTVDIRQPCLLLYPLMNGKKSNKKLLALSNFDPTQRRLQRVMLGHATECEMDAQGRILFSGPLRQHAKLEKGLMLVGQLNKFEIWSDVEWHTQIAEDIEIGSSADFAADALNDFSL.

SpoVT-AbrB domains follow at residues 5-52 and 81-124; these read ATAV…PLMN and ATEC…SDVE.

This sequence belongs to the MraZ family. In terms of assembly, forms oligomers.

It is found in the cytoplasm. It localises to the nucleoid. In Haemophilus influenzae (strain PittGG), this protein is Transcriptional regulator MraZ.